We begin with the raw amino-acid sequence, 323 residues long: tRNA U34 carboxymethyltransferase (323 aa).

Carboxy-S-adenosyl-L-methionine contacts are provided by residues Lys-91, Trp-105, Lys-110, Gly-130, 152–154 (DPT), 181–182 (IE), Met-196, Tyr-200, and Arg-315.

Belongs to the class I-like SAM-binding methyltransferase superfamily. CmoB family. In terms of assembly, homotetramer.

The catalysed reaction is carboxy-S-adenosyl-L-methionine + 5-hydroxyuridine(34) in tRNA = 5-carboxymethoxyuridine(34) in tRNA + S-adenosyl-L-homocysteine + H(+). Its function is as follows. Catalyzes carboxymethyl transfer from carboxy-S-adenosyl-L-methionine (Cx-SAM) to 5-hydroxyuridine (ho5U) to form 5-carboxymethoxyuridine (cmo5U) at position 34 in tRNAs. This chain is tRNA U34 carboxymethyltransferase, found in Salmonella paratyphi B (strain ATCC BAA-1250 / SPB7).